The sequence spans 577 residues: Cytochrome P450 714D1 (577 aa).

Residues 1–3 lie on the Lumenal side of the membrane; the sequence is MES. A helical; Signal-anchor for type III membrane protein membrane pass occupies residues 4–24; sequence FFVFFTAAALPVVVAAAVIAG. The Cytoplasmic segment spans residues 25–577; sequence LCITAAWLAR…STAPVHSSHN (553 aa). The tract at residues 315 to 343 is disordered; sequence REHGGKAAPPSPPERDFLGSIIENSGGQP. Cysteine 504 provides a ligand contact to heme.

Belongs to the cytochrome P450 family. The cofactor is heme. Expressed in rapidly elongating or dividing tissues, including the shoot apical meristem, the intercalary meristem and elongating zones of internodes, and panicle but not in young seedlings, roots and leaves. During the heading stage, the highest expression is detected in the flowering spikelets, anthers, the divisional zone and the node of the uppermost internode.

The protein resides in the endoplasmic reticulum membrane. Catalyzes the 16alpha,17-epoxidation on non-13-hydroxylated gibberellins (GAs), including GA4, GA9, and GA12. No activity with GA1, GA20, GA53 or ent-kaurenoic acid. Reduces the biological activity of GAs. This chain is Cytochrome P450 714D1 (CYP714D1), found in Oryza sativa subsp. japonica (Rice).